A 195-amino-acid polypeptide reads, in one-letter code: SAGA-associated factor 11 homolog (195 aa).

Residues 1 to 22 (MSAANMPTTTGAQGSGNQVPRT) form a disordered region. Residues 105–126 (CTCPNCDRLVAAARFAPHLEKC) form an SGF11-type zinc finger. Residues 140–195 (RLATKEGATSAHLHSSGNTGGTDDEDDVDWSSDKRRKKSNQNSRNNGSKKNNGKTF) form a disordered region. S171 carries the phosphoserine modification. A compositionally biased stretch (low complexity) spans 179 to 195 (NQNSRNNGSKKNNGKTF).

It belongs to the SGF11 family. As to quaternary structure, component of some SAGA transcription coactivator-HAT complexes, at least composed of Ada2b, not/nonstop, Pcaf/Gcn5, Sgf11 and Spt3. Within the SAGA complex, Sgf11, e(y)2, and not/nonstop form an additional subcomplex of SAGA called the DUB module (deubiquitination module). Interacts directly with not/nonstop. Interacts with the AMEX complex component xmas-2. Interacts with Cbp80; important for promoter recruitment of Sgf11 that is not associated with the DUB module.

Its subcellular location is the nucleus. It is found in the nucleoplasm. It localises to the cytoplasm. Functionally, component of the transcription regulatory histone acetylation (HAT) complex SAGA, a multiprotein complex that activates transcription by remodeling chromatin and mediating histone acetylation and deubiquitination. Within the SAGA complex, participates in a subcomplex that specifically deubiquitinates histone H2B. The SAGA complex is recruited to specific gene promoters by activators, where it is required for transcription. Required for nuclear receptor-mediated transactivation. Binds independently on SAGA to promoters in an RNA-dependent manner. Binds to mRNA and is essential for total mRNA export from the nucleus. Required to counteract heterochromatin silencing. Controls the development of neuronal connectivity in visual system by being required for accurate axon targeting in the optic lobe. Required for expression of ecdysone-induced genes such as br/broad. In Drosophila sechellia (Fruit fly), this protein is SAGA-associated factor 11 homolog.